Here is a 42-residue protein sequence, read N- to C-terminus: Photosystem I reaction center subunit IX (42 aa).

A helical membrane pass occupies residues 7–27; it reads YLSTAPVLATLWFGFLAGLLI.

The protein belongs to the PsaJ family.

The protein resides in the plastid. The protein localises to the chloroplast thylakoid membrane. Functionally, may help in the organization of the PsaE and PsaF subunits. The polypeptide is Photosystem I reaction center subunit IX (Huperzia lucidula (Shining clubmoss)).